The chain runs to 343 residues: Dihydroorotase (343 aa).

2 residues coordinate Zn(2+): H13 and H15. Substrate-binding positions include 15–17 (HLR) and N41. Residues K99, H136, and H174 each coordinate Zn(2+). K99 is modified (N6-carboxylysine). H136 is a binding site for substrate. L219 serves as a coordination point for substrate. D247 serves as a coordination point for Zn(2+). The active site involves D247. The substrate site is built by H251 and A263.

This sequence belongs to the metallo-dependent hydrolases superfamily. DHOase family. Class II DHOase subfamily. Homodimer. Requires Zn(2+) as cofactor.

It carries out the reaction (S)-dihydroorotate + H2O = N-carbamoyl-L-aspartate + H(+). Its pathway is pyrimidine metabolism; UMP biosynthesis via de novo pathway; (S)-dihydroorotate from bicarbonate: step 3/3. In terms of biological role, catalyzes the reversible cyclization of carbamoyl aspartate to dihydroorotate. The polypeptide is Dihydroorotase (Shewanella baltica (strain OS195)).